The chain runs to 116 residues: Non-specific lipid-transfer protein 10 (116 aa).

The N-terminal stretch at 1–22 is a signal peptide; the sequence is MMRVVLPLCLLLASIFAWGSEA. Intrachain disulfides connect Cys26-Cys73, Cys36-Cys50, Cys51-Cys98, and Cys71-Cys112.

Belongs to the plant LTP family.

Plant non-specific lipid-transfer proteins transfer phospholipids as well as galactolipids across membranes. May play a role in wax or cutin deposition in the cell walls of expanding epidermal cells and certain secretory tissues. This Arabidopsis thaliana (Mouse-ear cress) protein is Non-specific lipid-transfer protein 10 (LTP10).